The sequence spans 530 residues: Sensor protein kinase PilS (530 aa).

Transmembrane regions (helical) follow at residues 25–37 (LTIG…LISS), 57–70 (WCYL…ALFL), 76–98 (LLPI…YAGG), 101–119 (PSGI…NILL), 124–144 (GLVI…FLSL), and 156–174 (AGGL…QALV). Residues 175 to 530 (RRQEQTETLA…ITFAHPRKLS (356 aa)) lie on the Cytoplasmic side of the membrane. The PAS domain occupies 196-260 (ELNALILQRM…KQWRLNPSLR (65 aa)). The 212-residue stretch at 316-527 (GIAHEIRNPL…CFRITFAHPR (212 aa)) folds into the Histidine kinase domain. At His319 the chain carries Phosphohistidine; by autocatalysis.

As to quaternary structure, interacts with PilA.

The protein localises to the cell inner membrane. The catalysed reaction is ATP + protein L-histidine = ADP + protein N-phospho-L-histidine.. In terms of biological role, member of the two-component regulatory system PilS/PilR that regulates the expression of multiple genes including the type IV pilus (T4P) major subunit PilA. Thereby, plays a major role in the regulation of multiple motility pathways. Functions as a membrane-associated protein kinase that phosphorylates PilR in response to environmental signals leading to activation of specific gene promoters including the pilin gene. This chain is Sensor protein kinase PilS (pilS), found in Pseudomonas aeruginosa (strain ATCC 15692 / DSM 22644 / CIP 104116 / JCM 14847 / LMG 12228 / 1C / PRS 101 / PAO1).